A 114-amino-acid chain; its full sequence is Nuclear transition protein 2 (114 aa).

The interval 1–114 is disordered; the sequence is MDTKMQSLPT…KRRSSGRRYK (114 aa). Positions 12, 14, 16, 24, 29, 31, 35, and 38 each coordinate Zn(2+). Low complexity predominate over residues 16 to 25; it reads HSSSRPQSHT. The Nuclear localization signal motif lies at 87 to 95; it reads GKVSKRKAV. The span at 90-114 shows a compositional bias: basic residues; sequence SKRKAVRRRKRTHRAKRRSSGRRYK. At T101 the chain carries Phosphothreonine; by PKA. Phosphoserine; by PKA is present on S109.

The protein belongs to the nuclear transition protein 2 family. In terms of tissue distribution, testis.

It localises to the nucleus. The protein resides in the nucleolus. It is found in the chromosome. Functionally, plays a key role in the replacement of histones to protamine in the elongating spermatids of mammals. In condensing spermatids, loaded onto the nucleosomes, where it promotes the recruitment and processing of protamines, which are responsible for histone eviction. The protein is Nuclear transition protein 2 (Tnp2) of Rattus norvegicus (Rat).